The chain runs to 310 residues: MFRFDKEQIVLDIAGTKIGGQPGEYPTVLAGTIFYGGHSIIEDEKAGVFDKDKAEALIKTQEEMSDVTGNPHIVQTFGQTPEAIVKYLEFVGDITDAPFFIDSTSGEARIAGAEYASEVGLEDRAIYNSVNMAADESELEALKNTKLSASIVLGFNPMDPTVEGKIGIWEDGAGTIDKGLLEMAADCGIDKYLMDVAVTPLGQGAGVAVRTSFAVKSKWGYPVGSGIHNVPSAWDWLREYKKEHKEAWPVCDVGSNLIQQMAGGDFVLYGPIENARMAFPACAMADIFISEAAKDIGTEAVEDHPFFKLL.

It belongs to the MtrH family. As to quaternary structure, the complex is composed of 8 subunits; MtrA, MtrB, MtrC, MtrD, MtrE, MtrF, MtrG and MtrH.

It carries out the reaction 5-methyl-5,6,7,8-tetrahydromethanopterin + coenzyme M + 2 Na(+)(in) = 5,6,7,8-tetrahydromethanopterin + methyl-coenzyme M + 2 Na(+)(out). The protein operates within one-carbon metabolism; methanogenesis from CO(2); methyl-coenzyme M from 5,10-methylene-5,6,7,8-tetrahydromethanopterin: step 2/2. Its function is as follows. Part of a complex that catalyzes the formation of methyl-coenzyme M and tetrahydromethanopterin from coenzyme M and methyl-tetrahydromethanopterin. This is an energy-conserving, sodium-ion translocating step. MtrH catalyzes the transfer of the methyl group from methyl-tetrahydromethanopterin to the corrinoid prosthetic group of MtrA. This is Tetrahydromethanopterin S-methyltransferase subunit H (mtrH) from Methanothermobacter marburgensis (strain ATCC BAA-927 / DSM 2133 / JCM 14651 / NBRC 100331 / OCM 82 / Marburg) (Methanobacterium thermoautotrophicum).